We begin with the raw amino-acid sequence, 775 residues long: Kinesin-like protein KIF3B (775 aa).

A Kinesin motor domain is found at 9 to 341 (SVKVVVRCRP…LRYANRAKNI (333 aa)). 97 to 104 (GQTGTGKT) provides a ligand contact to ATP. Positions 372–419 (KRSGRKRRRRRRRRVGEGGEEFEDGEDEEDDDDDDEDEEEGVDADKNI) are disordered. A compositionally biased stretch (basic residues) spans 374 to 385 (SGRKRRRRRRRR). Positions 389–413 (GGEEFEDGEDEEDDDDDDEDEEEGV) are enriched in acidic residues. A coiled-coil region spans residues 501–591 (LELKRQEIAE…QNELTRELKL (91 aa)). Residues 716–775 (FHASLGSSPGLSASAAGFSKKPKSGRPKTGKKVSTPTSAHSPLSGSGSPLYPQSRGLVPK) form a disordered region. Positions 718-734 (ASLGSSPGLSASAAGFS) are enriched in low complexity. Over residues 735 to 746 (KKPKSGRPKTGK) the composition is skewed to basic residues. The segment covering 756–765 (SPLSGSGSPL) has biased composition (low complexity).

It belongs to the TRAFAC class myosin-kinesin ATPase superfamily. Kinesin family. Heterodimer of KIF3A and KIF3B. KIF3A/KIF3B heterodimer interacts with KIFAP3 forming a heterotrimeric (KIF3A/KIF3B/KIFAP3) complex.

Its subcellular location is the cytoplasm. The protein resides in the cytoskeleton. It localises to the cell projection. It is found in the cilium. The protein localises to the dendritic spine. Its function is as follows. Microtubule-based molecular motor that transport intracellular cargos, such as vesicles, organelles and protein complexes. Uses ATP hydrolysis to generate force to bind and move along the microtubule. Plays a role in cilia formation. Required for photoreceptor development. The polypeptide is Kinesin-like protein KIF3B (Danio rerio (Zebrafish)).